The sequence spans 98 residues: Nuclear protein 2 (98 aa).

Positions 1 to 11 (MEPAAPTVQPR) are enriched in low complexity. Disordered regions lie at residues 1-24 (MEPA…PPVG) and 78-98 (LNSQ…TRLT). Over residues 81–98 (QRKRRQRQLQPRPRTRLT) the composition is skewed to basic residues.

Belongs to the NUPR family.

It localises to the nucleus. Functionally, acts as a transcriptional repressor by inhibiting gene expression at the NUPR1 promoter in a p53/TP53-dependent manner in cancer cells. Involved in the G1 cell cycle arrest, and in a decrease in cell viability and cell proliferation. Plays a role as a negative regulator of the protumoral factor NUPR1. The sequence is that of Nuclear protein 2 from Bos taurus (Bovine).